Reading from the N-terminus, the 516-residue chain is Radial spoke head protein 3 homolog A (516 aa).

Disordered regions lie at residues 1–45, 120–139, and 190–233; these read MAAT…GNPA, STLNQASAMTDPNPRTAEAS, and PTGQ…PVEG. Residues 12–25 show a composition bias toward basic residues; the sequence is AKKRPLHQRARRPA. Polar residues predominate over residues 120–129; the sequence is STLNQASAMT. The span at 208 to 217 shows a compositional bias: basic residues; that stretch reads QARRRALARK. The span at 218-233 shows a compositional bias: basic and acidic residues; the sequence is RAQEQLKPRTPEPVEG. The residue at position 270 (Thr270) is a Phosphothreonine; by MAPK1. Positions 333 to 369 form a coiled coil; it reads YEEIRNVELAEVQRLEEQERRHREEKERRKKQQWEIV. The segment at 459-516 is disordered; the sequence is EAMPPGQKTNVINGPNTVTDPSVTTLHTQKPVLDRVSSQPAPSQERKPVEEGGHLMAE. Residues 465-486 are compositionally biased toward polar residues; it reads QKTNVINGPNTVTDPSVTTLHT. Residues 502–516 show a composition bias toward basic and acidic residues; it reads QERKPVEEGGHLMAE.

This sequence belongs to the flagellar radial spoke RSP3 family. In terms of assembly, may be a component of axonemal radial spokes. Interacts with IQUB. Interacts with phosphorylated MAPK1. Interacts with MEK1. Interacts with PKA regulatory subunits PRKAR1A and PRKAR1B. Interacts with RSPH1. Interacts with RSPH4A. Interacts with RSPH6A. Interacts with RSPH9. Interacts with CFAP61. Interacts with LRRC23.

The protein resides in the cytoplasm. It localises to the cytoskeleton. The protein localises to the cilium axoneme. Its subcellular location is the flagellum axoneme. In terms of biological role, may function as part of axonemal radial spoke complexes that play an important part in the motility of sperm and cilia. Functions as a protein kinase A-anchoring protein that scaffolds the cAMP-dependent protein kinase holoenzyme. May serve as a point of convergence for MAPK and PKA signaling in cilia. The protein is Radial spoke head protein 3 homolog A (Rsph3a) of Mus musculus (Mouse).